Here is a 470-residue protein sequence, read N- to C-terminus: Siroheme synthase 2 (470 aa).

The segment at 1–202 (MDYLPMFAKL…EDWQGAEQWL (202 aa)) is precorrin-2 dehydrogenase /sirohydrochlorin ferrochelatase. NAD(+) is bound by residues 22-23 (EV) and 43-44 (PE). Position 126 is a phosphoserine (Ser126). The interval 214-470 (GEVVLVGAGP…TCDLKLVSLA (257 aa)) is uroporphyrinogen-III C-methyltransferase. Residue Pro223 participates in S-adenosyl-L-methionine binding. The Proton acceptor role is filled by Asp246. Residue Lys268 is the Proton donor of the active site. Residues 299 to 301 (GGD), 329 to 330 (TA), Met381, and Gly410 each bind S-adenosyl-L-methionine.

It in the N-terminal section; belongs to the precorrin-2 dehydrogenase / sirohydrochlorin ferrochelatase family. This sequence in the C-terminal section; belongs to the precorrin methyltransferase family.

It catalyses the reaction uroporphyrinogen III + 2 S-adenosyl-L-methionine = precorrin-2 + 2 S-adenosyl-L-homocysteine + H(+). The catalysed reaction is precorrin-2 + NAD(+) = sirohydrochlorin + NADH + 2 H(+). It carries out the reaction siroheme + 2 H(+) = sirohydrochlorin + Fe(2+). It functions in the pathway cofactor biosynthesis; adenosylcobalamin biosynthesis; precorrin-2 from uroporphyrinogen III: step 1/1. Its pathway is cofactor biosynthesis; adenosylcobalamin biosynthesis; sirohydrochlorin from precorrin-2: step 1/1. The protein operates within porphyrin-containing compound metabolism; siroheme biosynthesis; precorrin-2 from uroporphyrinogen III: step 1/1. It participates in porphyrin-containing compound metabolism; siroheme biosynthesis; siroheme from sirohydrochlorin: step 1/1. It functions in the pathway porphyrin-containing compound metabolism; siroheme biosynthesis; sirohydrochlorin from precorrin-2: step 1/1. Functionally, multifunctional enzyme that catalyzes the SAM-dependent methylations of uroporphyrinogen III at position C-2 and C-7 to form precorrin-2 via precorrin-1. Then it catalyzes the NAD-dependent ring dehydrogenation of precorrin-2 to yield sirohydrochlorin. Finally, it catalyzes the ferrochelation of sirohydrochlorin to yield siroheme. The protein is Siroheme synthase 2 of Aeromonas hydrophila subsp. hydrophila (strain ATCC 7966 / DSM 30187 / BCRC 13018 / CCUG 14551 / JCM 1027 / KCTC 2358 / NCIMB 9240 / NCTC 8049).